We begin with the raw amino-acid sequence, 680 residues long: Protein FAR1-RELATED SEQUENCE 11 (680 aa).

Positions 1–36 are disordered; the sequence is MSDDPGQMLLIYDDPSDQRSLSLDDASSTEESPDDN. Positions 62–156 constitute an FAR1 domain; that stretch reads EFYSTFAKRC…ANHHNHELLE (95 aa). In terms of domain architecture, MULE spans 277–373; it reads AVVFDTTHRL…CIWMVVGKFP (97 aa). Residues 556-589 form an SWIM-type zinc finger; that stretch reads YWVPQEGIISCSCQLFEFSGFLCRHALRVLSTGN.

The protein belongs to the FHY3/FAR1 family. As to expression, expressed in hypocotyls, rosette and cauline leaves, inflorescences stems, flowers and siliques.

The protein resides in the nucleus. In terms of biological role, putative transcription activator involved in regulating light control of development. The polypeptide is Protein FAR1-RELATED SEQUENCE 11 (FRS11) (Arabidopsis thaliana (Mouse-ear cress)).